The chain runs to 709 residues: Polyribonucleotide nucleotidyltransferase (709 aa).

Positions 485 and 491 each coordinate Mg(2+). Residues 552–611 form the KH domain; that stretch reads PRIYTMKIDPKKIKDVIGKGGATIRSLTEETGTSIDIDDDGTVKIAAVDSNAAKNVMGRI. The region spanning 621–689 is the S1 motif domain; it reads GAIYKGKVTR…RQGRIRLTMK (69 aa).

The protein belongs to the polyribonucleotide nucleotidyltransferase family. As to quaternary structure, component of the RNA degradosome, which is a multiprotein complex involved in RNA processing and mRNA degradation. The cofactor is Mg(2+).

It is found in the cytoplasm. It catalyses the reaction RNA(n+1) + phosphate = RNA(n) + a ribonucleoside 5'-diphosphate. Its function is as follows. Involved in mRNA degradation. Catalyzes the phosphorolysis of single-stranded polyribonucleotides processively in the 3'- to 5'-direction. The chain is Polyribonucleotide nucleotidyltransferase from Haemophilus influenzae (strain PittGG).